The following is a 338-amino-acid chain: Ketol-acid reductoisomerase (NADP(+)) (338 aa).

A KARI N-terminal Rossmann domain is found at 1-181; the sequence is MKVFYDKDAD…GGGKAGIIET (181 aa). NADP(+)-binding positions include 24–27, Arg47, and Ser52; that span reads YGSQ. Residue His107 is part of the active site. An NADP(+)-binding site is contributed by Gly133. One can recognise a KARI C-terminal knotted domain in the interval 182-327; sequence NFREETETDL…EKLRAMMPWI (146 aa). Asp190, Glu194, Glu226, and Glu230 together coordinate Mg(2+). Ser251 is a binding site for substrate.

This sequence belongs to the ketol-acid reductoisomerase family. Mg(2+) serves as cofactor.

The enzyme catalyses (2R)-2,3-dihydroxy-3-methylbutanoate + NADP(+) = (2S)-2-acetolactate + NADPH + H(+). The catalysed reaction is (2R,3R)-2,3-dihydroxy-3-methylpentanoate + NADP(+) = (S)-2-ethyl-2-hydroxy-3-oxobutanoate + NADPH + H(+). It functions in the pathway amino-acid biosynthesis; L-isoleucine biosynthesis; L-isoleucine from 2-oxobutanoate: step 2/4. It participates in amino-acid biosynthesis; L-valine biosynthesis; L-valine from pyruvate: step 2/4. Its function is as follows. Involved in the biosynthesis of branched-chain amino acids (BCAA). Catalyzes an alkyl-migration followed by a ketol-acid reduction of (S)-2-acetolactate (S2AL) to yield (R)-2,3-dihydroxy-isovalerate. In the isomerase reaction, S2AL is rearranged via a Mg-dependent methyl migration to produce 3-hydroxy-3-methyl-2-ketobutyrate (HMKB). In the reductase reaction, this 2-ketoacid undergoes a metal-dependent reduction by NADPH to yield (R)-2,3-dihydroxy-isovalerate. In Leptothrix cholodnii (strain ATCC 51168 / LMG 8142 / SP-6) (Leptothrix discophora (strain SP-6)), this protein is Ketol-acid reductoisomerase (NADP(+)).